The following is a 627-amino-acid chain: Transducer protein MpcT (627 aa).

A run of 2 helical transmembrane segments spans residues 28–48 (MLTAVGLQFLAAGGMAFLTVF) and 55–75 (LIGVGGMLALSVVAFYNTYLI). HAMP domains follow at residues 78–132 (ADFV…VASR) and 192–247 (EQLR…DTIS). Residues 266-502 (RVDAVADRSA…DVVGMVEEVA (237 aa)) form the Methyl-accepting transducer domain. E310, E416, and E507 each carry glutamate methyl ester (Glu). Disordered stretches follow at residues 505–527 (SEETAAESDTVADNAAEQTDATD) and 557–627 (GTAD…ADSQ). Low complexity predominate over residues 580-590 (AAAVVDQPQPA).

This sequence belongs to the methyl-accepting chemotaxis (MCP) protein family. As to quaternary structure, interacts with CheA, CheY and CheW1. In terms of processing, methylated by CheR.

Its subcellular location is the cell membrane. Functionally, mediates bacteriorhodopsin- and halorhodopsin-dependent photoresponses by detecting membrane potential changes. Probably transduces the signal to the histidine kinase CheA. The chain is Transducer protein MpcT (mpcT) from Halobacterium salinarum (strain ATCC 29341 / DSM 671 / R1).